The primary structure comprises 758 residues: 5-methyltetrahydropteroyltriglutamate--homocysteine methyltransferase (758 aa).

Residues 16 to 19 (RELK) and Lys-116 contribute to the 5-methyltetrahydropteroyltri-L-glutamate site. L-homocysteine is bound by residues 436–438 (IGS) and Glu-489. Residues 436–438 (IGS) and Glu-489 contribute to the L-methionine site. Residues 520–521 (RC) and Trp-566 each bind 5-methyltetrahydropteroyltri-L-glutamate. Asp-604 provides a ligand contact to L-homocysteine. Asp-604 serves as a coordination point for L-methionine. Residue Glu-610 coordinates 5-methyltetrahydropteroyltri-L-glutamate. His-646, Cys-648, and Glu-670 together coordinate Zn(2+). His-699 functions as the Proton donor in the catalytic mechanism. Cys-731 is a Zn(2+) binding site.

Belongs to the vitamin-B12 independent methionine synthase family. Zn(2+) serves as cofactor.

The catalysed reaction is 5-methyltetrahydropteroyltri-L-glutamate + L-homocysteine = tetrahydropteroyltri-L-glutamate + L-methionine. It functions in the pathway amino-acid biosynthesis; L-methionine biosynthesis via de novo pathway; L-methionine from L-homocysteine (MetE route): step 1/1. Functionally, catalyzes the transfer of a methyl group from 5-methyltetrahydrofolate to homocysteine resulting in methionine formation. In Xylella fastidiosa (strain M23), this protein is 5-methyltetrahydropteroyltriglutamate--homocysteine methyltransferase.